Here is a 135-residue protein sequence, read N- to C-terminus: UPF0102 protein Aave_0630 (135 aa).

A disordered region spans residues 1–21 (MGILEKKTAGPGGAARKTTTR).

Belongs to the UPF0102 family.

The polypeptide is UPF0102 protein Aave_0630 (Paracidovorax citrulli (strain AAC00-1) (Acidovorax citrulli)).